A 570-amino-acid polypeptide reads, in one-letter code: Spermatocyte protein spe-26 (570 aa).

6 Kelch repeats span residues 244–291 (VLII…IVDG), 293–338 (LYLF…SVVY), 341–393 (RIYV…VFEN), 395–440 (IYVS…NHGN), 442–487 (LLIV…SYKG), and 489–535 (LFSV…VAPN).

In terms of tissue distribution, testis, in both spermatogonial cells and spermatocytes.

It is found in the cytoplasm. The protein localises to the cytoskeleton. Its function is as follows. May play a role in the spermatocyte cytoskeleton, possibly interacting with actin. This chain is Spermatocyte protein spe-26 (spe-26), found in Caenorhabditis elegans.